The primary structure comprises 433 residues: ATP-dependent protease ATPase subunit HslU (433 aa).

Residues valine 18, 60 to 65 (GVGKTE), aspartate 246, glutamate 311, and arginine 383 contribute to the ATP site.

It belongs to the ClpX chaperone family. HslU subfamily. In terms of assembly, a double ring-shaped homohexamer of HslV is capped on each side by a ring-shaped HslU homohexamer. The assembly of the HslU/HslV complex is dependent on binding of ATP.

The protein localises to the cytoplasm. In terms of biological role, ATPase subunit of a proteasome-like degradation complex; this subunit has chaperone activity. The binding of ATP and its subsequent hydrolysis by HslU are essential for unfolding of protein substrates subsequently hydrolyzed by HslV. HslU recognizes the N-terminal part of its protein substrates and unfolds these before they are guided to HslV for hydrolysis. The chain is ATP-dependent protease ATPase subunit HslU from Nitrobacter winogradskyi (strain ATCC 25391 / DSM 10237 / CIP 104748 / NCIMB 11846 / Nb-255).